The sequence spans 869 residues: MTESAIDDQRFNLTKELQRHSCRDQGKITQKDDALDFISYSSFQSSFNTDQKSANNGSTVRRSIRSIFRRAAELPRVHMGPLTYSHGINELVNKKLRKDCDLSTLCRVLQRGIRMIRMTRRRRKFYEFKLINNNGQIIWKDGSKYLELDSVKDIRIGDTASTYQEEVDPKRLRSDSKLWIAIIYKVSNKLKALHVVALNELDFNTFLSCICGLVKLRRELMESILLPDNSQFARIHWQITVSEKEEDEKKDTLSFADVKKLCDKFHIYVSTGQLLEFFQLADINHNGLLNYFEFEKFIKILKNRKEVNMIWSKFTKPPHSHLSFENFFQFLITEQHEQVDRQTAWSYFIKYREPTQLTMGQDGFTKFLKEQPYLVEVKEELYSKPLNHYFIASSHNTYLLGKQIAETPSVEGYIQVLQQGCRCVEIDIWDGENGPVVCHGFLTSAIPLKTVIRVIKKYAFITSPYPLIISLEINCNKDNQKLASLIMREVLAEQLYFVGTRTDKLPSPRELKHKILLKSKKTSEATRGLSVNEPFPSSFSSSYESANEQELRMKDDSTNSSSATNSSSMQRIKRIGLKKHADIINDVSNISGIHGIKFRNFSLPESKTIAHCFSLNERKVEYMIKDKHLKLSLDKHNRRYLMRVYPHVLRYKSSNFNPIPFWKAGVQMVATNWQTNDIGQQLNLAMFQILDHQPDGSFKSGYVLKPKKLLPVVTKAKMIPLIYEHFENGSDPVTVKIRILSTQLLPRLNDTSPSRNNTNSFVKVEFHTDDEPTMPISIDKGTRISATEASTKSSQGNGFNPIWDAEVSITLKDTDLTFIKFMVISEETQIASVCLKLNYLRMGYRHIPLFNMEGEQYIFCTLFIHTQIL.

An EF-hand domain is found at 269–304 (VSTGQLLEFFQLADINHNGLLNYFEFEKFIKILKNR). Positions 282, 284, 286, and 293 each coordinate Ca(2+). The region spanning 382 to 520 (YSKPLNHYFI…LKHKILLKSK (139 aa)) is the PI-PLC X-box domain. Catalysis depends on residues histidine 395 and histidine 439. Residues lysine 518 and lysine 520 each contribute to the substrate site. The interval 546 to 571 (ANEQELRMKDDSTNSSSATNSSSMQR) is disordered. Residues 558–568 (TNSSSATNSSS) are compositionally biased toward low complexity. One can recognise a PI-PLC Y-box domain in the interval 590-709 (ISGIHGIKFR…SGYVLKPKKL (120 aa)). 2 residues coordinate substrate: serine 614 and arginine 643. One can recognise a C2 domain in the interval 713 to 862 (VTKAKMIPLI…EGEQYIFCTL (150 aa)).

As to quaternary structure, interacts with SGD1. The cofactor is Ca(2+).

The enzyme catalyses a 1,2-diacyl-sn-glycero-3-phospho-(1D-myo-inositol-4,5-bisphosphate) + H2O = 1D-myo-inositol 1,4,5-trisphosphate + a 1,2-diacyl-sn-glycerol + H(+). Its function is as follows. The production of the second messenger molecules diacylglycerol (DAG) and inositol 1,4,5-trisphosphate (IP3) is mediated by activated phosphatidylinositol-specific phospholipase C enzymes. Required for cell growth, osmoresistance and expression of GPD1. The protein is 1-phosphatidylinositol 4,5-bisphosphate phosphodiesterase 1 (PLC1) of Saccharomyces cerevisiae (strain ATCC 204508 / S288c) (Baker's yeast).